Here is a 342-residue protein sequence, read N- to C-terminus: D-erythrose-4-phosphate dehydrogenase (342 aa).

Residue 12 to 13 (RI) coordinates NAD(+). Substrate contacts are provided by residues 154–156 (SCT), R200, 213–214 (TK), and R236. The active-site Nucleophile is C155. Residue N318 coordinates NAD(+).

This sequence belongs to the glyceraldehyde-3-phosphate dehydrogenase family. Epd subfamily. As to quaternary structure, homotetramer.

The protein localises to the cytoplasm. The enzyme catalyses D-erythrose 4-phosphate + NAD(+) + H2O = 4-phospho-D-erythronate + NADH + 2 H(+). It functions in the pathway cofactor biosynthesis; pyridoxine 5'-phosphate biosynthesis; pyridoxine 5'-phosphate from D-erythrose 4-phosphate: step 1/5. Its function is as follows. Catalyzes the NAD-dependent conversion of D-erythrose 4-phosphate to 4-phosphoerythronate. The sequence is that of D-erythrose-4-phosphate dehydrogenase from Klebsiella pneumoniae (strain 342).